The following is a 266-amino-acid chain: Isoprenyl transferase (266 aa).

D36 is an active-site residue. D36 is a Mg(2+) binding site. Residues 37–40 (GNGR), W41, R49, H53, and 81–83 (STE) contribute to the substrate site. The active-site Proton acceptor is N84. Residues W85, R87, R204, and 210–212 (RIS) contribute to the substrate site. E223 is a binding site for Mg(2+).

Belongs to the UPP synthase family. Homodimer. Mg(2+) serves as cofactor.

In terms of biological role, catalyzes the condensation of isopentenyl diphosphate (IPP) with allylic pyrophosphates generating different type of terpenoids. The sequence is that of Isoprenyl transferase from Prochlorococcus marinus (strain SARG / CCMP1375 / SS120).